The sequence spans 226 residues: Ribonuclease 3 (226 aa).

The region spanning 2-129 (IETISKTIKY…LIGAIYLDGG (128 aa)) is the RNase III domain. A Mg(2+)-binding site is contributed by E42. D46 is an active-site residue. Residues N115 and E118 each contribute to the Mg(2+) site. E118 is an active-site residue. In terms of domain architecture, DRBM spans 154–223 (DAKTILQEFI…ASLMLNQIKD (70 aa)).

The protein belongs to the ribonuclease III family. Homodimer. Mg(2+) is required as a cofactor.

Its subcellular location is the cytoplasm. It catalyses the reaction Endonucleolytic cleavage to 5'-phosphomonoester.. Its function is as follows. Digests double-stranded RNA. Involved in the processing of primary rRNA transcript to yield the immediate precursors to the large and small rRNAs (23S and 16S). Processes some mRNAs, and tRNAs when they are encoded in the rRNA operon. Processes pre-crRNA and tracrRNA of type II CRISPR loci if present in the organism. This chain is Ribonuclease 3, found in Ehrlichia canis (strain Jake).